We begin with the raw amino-acid sequence, 1344 residues long: Myb-binding protein 1A (1344 aa).

A disordered region spans residues 1–24 (MAEMKSPTKAEPATPAEAAQSDRH). Residue alanine 2 is modified to N-acetylalanine. Positions 2 to 580 (AEMKSPTKAE…WDQMMSTLKE (579 aa)) are interaction with MYB. Low complexity predominate over residues 7 to 19 (PTKAEPATPAEAA). 2 positions are modified to N6-acetyllysine: lysine 69 and lysine 156. 2 short sequence motifs (nuclear export signal) span residues 238–256 (SEDN…ANSV) and 261–279 (KLPN…ESRF). Disordered regions lie at residues 710-751 (DEKQ…DKDV) and 1146-1344 (QRPK…VQTP). Residues 732-747 (SDMDSEDGEESEEEDR) show a composition bias toward acidic residues. Residues 1148-1159 (PKSEKKNAKDIP) are compositionally biased toward basic and acidic residues. Lysine 1149 participates in a covalent cross-link: Glycyl lysine isopeptide (Lys-Gly) (interchain with G-Cter in SUMO2). A required for nuclear and nucleolar localization region spans residues 1152-1344 (KKNAKDIPSD…RVASRRVQTP (193 aa)). Residues serine 1160 and serine 1164 each carry the phosphoserine modification. Residues 1168-1185 (TKRKKKGFLPETKKRKKL) show a composition bias toward basic residues. Serine 1187 is subject to Phosphoserine. Positions 1188–1202 (EGTTPEKNAASQQDA) are enriched in polar residues. At threonine 1191 the chain carries Phosphothreonine. Residues serine 1219 and serine 1244 each carry the phosphoserine modification. Positions 1249–1258 (NPTLSPSTPA) are enriched in polar residues. Threonine 1251 carries the post-translational modification Phosphothreonine. Position 1253 is a phosphoserine (serine 1253). Phosphothreonine occurs at positions 1256 and 1277. 3 positions are modified to phosphoserine: serine 1280, serine 1303, and serine 1318. A compositionally biased stretch (low complexity) spans 1317–1329 (LSLVSRSPSLLQS). Arginine 1322 is modified (citrulline). Serine 1323, serine 1325, and serine 1329 each carry phosphoserine.

This sequence belongs to the MYBBP1A family. In terms of assembly, component of the B-WICH complex, at least composed of SMARCA5/SNF2H, BAZ1B/WSTF, SF3B1, DEK, MYO1C, ERCC6, MYBBP1A and DDX21. Binds to and represses JUN and MYB via the leucine zipper regions present in these proteins. Also binds to and represses PPARGC1A: this interaction is abrogated when PPARGC1A is phosphorylated by MAPK1/ERK. Binds to and stimulates transcription by AHR. Binds to KPNA2. Interacts with CLOCK and CRY1. Citrullinated by PADI4. In terms of tissue distribution, ubiquitously expressed.

The protein resides in the nucleus. Its subcellular location is the nucleolus. The protein localises to the cytoplasm. May activate or repress transcription via interactions with sequence specific DNA-binding proteins. Repression may be mediated at least in part by histone deacetylase activity (HDAC activity). Acts as a corepressor and in concert with CRY1, represses the transcription of the core circadian clock component PER2. Preferentially binds to dimethylated histone H3 'Lys-9' (H3K9me2) on the PER2 promoter. Has a role in rRNA biogenesis together with PWP1. This chain is Myb-binding protein 1A (Mybbp1a), found in Mus musculus (Mouse).